The chain runs to 817 residues: Probable beta-glucosidase G (817 aa).

The signal sequence occupies residues 1–20 (MASIAHLIFSGLLAATVANS). N-linked (GlcNAc...) asparagine glycosylation is found at asparagine 40, asparagine 58, asparagine 229, and asparagine 276. Aspartate 304 is a catalytic residue. 10 N-linked (GlcNAc...) asparagine glycosylation sites follow: asparagine 343, asparagine 350, asparagine 402, asparagine 507, asparagine 563, asparagine 584, asparagine 623, asparagine 662, asparagine 679, and asparagine 715.

This sequence belongs to the glycosyl hydrolase 3 family.

It is found in the secreted. The catalysed reaction is Hydrolysis of terminal, non-reducing beta-D-glucosyl residues with release of beta-D-glucose.. It participates in glycan metabolism; cellulose degradation. In terms of biological role, beta-glucosidases are one of a number of cellulolytic enzymes involved in the degradation of cellulosic biomass. Catalyzes the last step releasing glucose from the inhibitory cellobiose. The chain is Probable beta-glucosidase G (bglG) from Neosartorya fischeri (strain ATCC 1020 / DSM 3700 / CBS 544.65 / FGSC A1164 / JCM 1740 / NRRL 181 / WB 181) (Aspergillus fischerianus).